Here is a 238-residue protein sequence, read N- to C-terminus: ATP synthase subunit a (238 aa).

Transmembrane regions (helical) follow at residues 18–38 (LTLLAVCIVTIAVIFAFVFWA), 76–96 (YSLLLFTIFLFVAVANNLGLF), 114–134 (NLAFDLALSLFITLMVHIEGV), 166–186 (SLAIRLFGNIFAGEVVTGLIV), and 193–213 (VYWWPIAFLVNMAWTAFSVFI).

This sequence belongs to the ATPase A chain family. F-type ATPases have 2 components, CF(1) - the catalytic core - and CF(0) - the membrane proton channel. CF(1) has five subunits: alpha(3), beta(3), gamma(1), delta(1), epsilon(1). CF(0) has three main subunits: a(1), b(2) and c(9-12). The alpha and beta chains form an alternating ring which encloses part of the gamma chain. CF(1) is attached to CF(0) by a central stalk formed by the gamma and epsilon chains, while a peripheral stalk is formed by the delta and b chains.

The protein localises to the cell membrane. Functionally, key component of the proton channel; it plays a direct role in the translocation of protons across the membrane. This chain is ATP synthase subunit a, found in Streptococcus pyogenes serotype M5 (strain Manfredo).